The sequence spans 382 residues: Lipid-A-disaccharide synthase (382 aa).

The protein belongs to the LpxB family.

It catalyses the reaction 2-N,3-O-bis[(3R)-3-hydroxytetradecanoyl]-alpha-D-glucosaminyl 1-phosphate + UDP-2-N,3-O-bis[(3R)-3-hydroxytetradecanoyl]-alpha-D-glucosamine = lipid A disaccharide (E. coli) + UDP + H(+). The catalysed reaction is a lipid X + a UDP-2-N,3-O-bis[(3R)-3-hydroxyacyl]-alpha-D-glucosamine = a lipid A disaccharide + UDP + H(+). It functions in the pathway glycolipid biosynthesis; lipid IV(A) biosynthesis; lipid IV(A) from (3R)-3-hydroxytetradecanoyl-[acyl-carrier-protein] and UDP-N-acetyl-alpha-D-glucosamine: step 5/6. Its function is as follows. Condensation of UDP-2,3-diacylglucosamine and 2,3-diacylglucosamine-1-phosphate to form lipid A disaccharide, a precursor of lipid A, a phosphorylated glycolipid that anchors the lipopolysaccharide to the outer membrane of the cell. The chain is Lipid-A-disaccharide synthase from Sodalis glossinidius (strain morsitans).